Here is a 203-residue protein sequence, read N- to C-terminus: High frequency lysogenization protein HflD homolog (203 aa).

It belongs to the HflD family.

It is found in the cytoplasm. It localises to the cell inner membrane. This chain is High frequency lysogenization protein HflD homolog, found in Dichelobacter nodosus (strain VCS1703A).